We begin with the raw amino-acid sequence, 343 residues long: Flap endonuclease 1 (343 aa).

Positions 1-98 (MGVPIGDLVP…KELEKRREAR (98 aa)) are N-domain. 7 residues coordinate Mg(2+): D27, D80, E152, E154, D173, D175, and D236. Residues 116-258 (EARKYAQRAT…KALEIVRYSR (143 aa)) are I-domain. The interaction with PCNA stretch occupies residues 330-338 (RQSTLESWF).

It belongs to the XPG/RAD2 endonuclease family. FEN1 subfamily. As to quaternary structure, interacts with PCNA. PCNA stimulates the nuclease activity without altering cleavage specificity. Mg(2+) serves as cofactor.

Functionally, structure-specific nuclease with 5'-flap endonuclease and 5'-3' exonuclease activities involved in DNA replication and repair. During DNA replication, cleaves the 5'-overhanging flap structure that is generated by displacement synthesis when DNA polymerase encounters the 5'-end of a downstream Okazaki fragment. Binds the unpaired 3'-DNA end and kinks the DNA to facilitate 5' cleavage specificity. Cleaves one nucleotide into the double-stranded DNA from the junction in flap DNA, leaving a nick for ligation. Also involved in the base excision repair (BER) pathway. Acts as a genome stabilization factor that prevents flaps from equilibrating into structures that lead to duplications and deletions. Also possesses 5'-3' exonuclease activity on nicked or gapped double-stranded DNA. This Pyrococcus horikoshii (strain ATCC 700860 / DSM 12428 / JCM 9974 / NBRC 100139 / OT-3) protein is Flap endonuclease 1.